A 115-amino-acid chain; its full sequence is Large ribosomal subunit protein bL20 (115 aa).

The protein belongs to the bacterial ribosomal protein bL20 family.

In terms of biological role, binds directly to 23S ribosomal RNA and is necessary for the in vitro assembly process of the 50S ribosomal subunit. It is not involved in the protein synthesizing functions of that subunit. This Chlorobaculum tepidum (strain ATCC 49652 / DSM 12025 / NBRC 103806 / TLS) (Chlorobium tepidum) protein is Large ribosomal subunit protein bL20.